Reading from the N-terminus, the 265-residue chain is GTP cyclohydrolase FolE2 (265 aa).

This sequence belongs to the GTP cyclohydrolase IV family.

It catalyses the reaction GTP + H2O = 7,8-dihydroneopterin 3'-triphosphate + formate + H(+). Its pathway is cofactor biosynthesis; 7,8-dihydroneopterin triphosphate biosynthesis; 7,8-dihydroneopterin triphosphate from GTP: step 1/1. In terms of biological role, converts GTP to 7,8-dihydroneopterin triphosphate. The polypeptide is GTP cyclohydrolase FolE2 (Bordetella petrii (strain ATCC BAA-461 / DSM 12804 / CCUG 43448)).